The chain runs to 426 residues: Histidine--tRNA ligase (426 aa).

This sequence belongs to the class-II aminoacyl-tRNA synthetase family. In terms of assembly, homodimer.

The protein localises to the cytoplasm. The enzyme catalyses tRNA(His) + L-histidine + ATP = L-histidyl-tRNA(His) + AMP + diphosphate + H(+). This Colwellia psychrerythraea (strain 34H / ATCC BAA-681) (Vibrio psychroerythus) protein is Histidine--tRNA ligase.